We begin with the raw amino-acid sequence, 278 residues long: Probable 3-hydroxybutyryl-CoA dehydrogenase (278 aa).

The protein belongs to the 3-hydroxyacyl-CoA dehydrogenase family.

The enzyme catalyses (3S)-3-hydroxybutanoyl-CoA + NADP(+) = acetoacetyl-CoA + NADPH + H(+). It functions in the pathway lipid metabolism; butanoate metabolism. The polypeptide is Probable 3-hydroxybutyryl-CoA dehydrogenase (hbd) (Deinococcus radiodurans (strain ATCC 13939 / DSM 20539 / JCM 16871 / CCUG 27074 / LMG 4051 / NBRC 15346 / NCIMB 9279 / VKM B-1422 / R1)).